Reading from the N-terminus, the 580-residue chain is Putative ankyrin repeat protein L63 (580 aa).

14 ANK repeats span residues 81–110, 111–140, 141–170, 172–200, 202–230, 314–339, 340–369, 370–399, 400–429, 431–459, 461–489, 490–519, 521–549, and 551–579; these read SLNRHFKMSCEKGQYTIVTYLVALGADFRI, DNDYGLIHAAKNGHIGVVKYLVSKGVNIGA, NDNCAIKFASENGHLEVVEYLVSKGADINA, NNYPIEMASKNGHLKVVEYLVSLGVDIRA, DDYVVGLAYYYDHHEVVDYLVSQGAVLNK, SLDDYLVKSCCEGDLSIIKDLILLGA, SERKAVMLACQNGHLEIIRYFVSQGFNIKC, GSNCAVTIASENGHIEVVRYLISLGADINS, GNNYAIKYASENGHLEVVKYLVDQGANIRA, NDRAVRFASRKGHLEVVKYLVSKGANIRA, DDRAVTLASQNGHLEVVKYLVSQGTDIKA, GDDYAVRWASRNGHLEVVKYLISQGANIKA, DDYAVRWASLNGHLEVVKFLVNQNADIRA, and NNYAVRWAHKNKHFDVVEYLISQGAVINP.

In Acanthamoeba polyphaga (Amoeba), this protein is Putative ankyrin repeat protein L63.